The primary structure comprises 112 residues: MTSIRAVFIFLWLQLDLVNGENVEQHPSTLSVQEGDSAVIKCTYSDSASNYFPWYKQELGKGPQLIIDIRSNVGEKKDQRIAVTLNKTAKHFSLHITETQPEDSAVYFCAAS.

The N-terminal stretch at 1–20 (MTSIRAVFIFLWLQLDLVNG) is a signal peptide. Residues 21–112 (ENVEQHPSTL…DSAVYFCAAS (92 aa)) form the Ig-like domain. Cysteine 42 and cysteine 109 are oxidised to a cystine. Asparagine 86 carries an N-linked (GlcNAc...) asparagine glycan.

Alpha-beta TR is a heterodimer composed of an alpha and beta chain; disulfide-linked. The alpha-beta TR is associated with the transmembrane signaling CD3 coreceptor proteins to form the TR-CD3 (TcR or TCR). The assembly of alpha-beta TR heterodimers with CD3 occurs in the endoplasmic reticulum where a single alpha-beta TR heterodimer associates with one CD3D-CD3E heterodimer, one CD3G-CD3E heterodimer and one CD247 homodimer forming a stable octameric structure. CD3D-CD3E and CD3G-CD3E heterodimers preferentially associate with TR alpha and TR beta chains, respectively. The association of the CD247 homodimer is the last step of TcR assembly in the endoplasmic reticulum and is required for transport to the cell surface.

The protein resides in the cell membrane. V region of the variable domain of T cell receptor (TR) alpha chain that participates in the antigen recognition. Alpha-beta T cell receptors are antigen specific receptors which are essential to the immune response and are present on the cell surface of T lymphocytes. Recognize peptide-major histocompatibility (MH) (pMH) complexes that are displayed by antigen presenting cells (APC), a prerequisite for efficient T cell adaptive immunity against pathogens. Binding of alpha-beta TR to pMH complex initiates TR-CD3 clustering on the cell surface and intracellular activation of LCK that phosphorylates the ITAM motifs of CD3G, CD3D, CD3E and CD247 enabling the recruitment of ZAP70. In turn ZAP70 phosphorylates LAT, which recruits numerous signaling molecules to form the LAT signalosome. The LAT signalosome propagates signal branching to three major signaling pathways, the calcium, the mitogen-activated protein kinase (MAPK) kinase and the nuclear factor NF-kappa-B (NF-kB) pathways, leading to the mobilization of transcription factors that are critical for gene expression and essential for T cell growth and differentiation. The T cell repertoire is generated in the thymus, by V-(D)-J rearrangement. This repertoire is then shaped by intrathymic selection events to generate a peripheral T cell pool of self-MH restricted, non-autoaggressive T cells. Post-thymic interaction of alpha-beta TR with the pMH complexes shapes TR structural and functional avidity. This Homo sapiens (Human) protein is T cell receptor alpha variable 13-1.